The sequence spans 96 residues: Small ribosomal subunit protein bS16 (96 aa).

The protein belongs to the bacterial ribosomal protein bS16 family.

This chain is Small ribosomal subunit protein bS16, found in Vesicomyosocius okutanii subsp. Calyptogena okutanii (strain HA).